The sequence spans 24 residues: Probable caffeoyl-CoA O-methyltransferase (24 aa).

Belongs to the class I-like SAM-binding methyltransferase superfamily. Cation-dependent O-methyltransferase family. CCoAMT subfamily. A divalent metal cation is required as a cofactor.

It carries out the reaction (E)-caffeoyl-CoA + S-adenosyl-L-methionine = (E)-feruloyl-CoA + S-adenosyl-L-homocysteine + H(+). Its pathway is aromatic compound metabolism; phenylpropanoid biosynthesis. Its function is as follows. Methylates caffeoyl-CoA to feruloyl-CoA and 5-hydroxyferuloyl-CoA to sinapoyl-CoA. Plays a role in the synthesis of feruloylated polysaccharides. Involved in the reinforcement of the plant cell wall. Also involved in the responding to wounding or pathogen challenge by the increased formation of cell wall-bound ferulic acid polymers. In Pinus pinaster (Maritime pine), this protein is Probable caffeoyl-CoA O-methyltransferase.